The sequence spans 358 residues: Na(+)/H(+) exchange regulatory cofactor NHE-RF1 (358 aa).

S2 is subject to N-acetylserine. 2 positions are modified to phosphoserine: S2 and S46. The region spanning 14–94 is the PDZ 1 domain; the sequence is LCCLEKGPNG…AVRLLVVDPE (81 aa). A compositionally biased stretch (low complexity) spans 114–134; it reads QETPGQAEPAAAAEAQGAGNE. Disordered regions lie at residues 114 to 192 and 269 to 358; these read QETP…EASG and SREA…FSNL. Residues 135–149 show a composition bias toward basic and acidic residues; the sequence is NEPREADKSHPEQRK. Residues 154 to 234 enclose the PDZ 2 domain; it reads LCTMKKGPSG…ETKLLVVDRE (81 aa). Phosphoserine is present on residues S162, S269, S280, S290, and S291. A compositionally biased stretch (polar residues) spans 287-306; sequence RSASSDTSEELNSQDSPPKQ. T293 carries the post-translational modification Phosphothreonine. Phosphoserine occurs at positions 294, 299, and 302. The segment covering 307 to 319 has biased composition (low complexity); sequence DSTAPSSTSSSDP. The span at 348-358 shows a compositional bias: basic and acidic residues; the sequence is WSKKNELFSNL.

As to quaternary structure, homodimer, and heterodimer with NHERF2. Binds the N-termini of EZR, RDX and MSN. Binds the C-termini of PDGFRA, PDGFRB, ADRB2, NOS2 and CFTR. Binds ARHGAP17, EPI64, RACK1, OPRK1, GNAQ, CTNNB1 and PLCB3. Binds PDZK1. Interacts with CLCN3. Binds the C-terminus of PAG1. In resting T-cells, part of a PAG1-NHERF1-MSN complex which is disrupted upon TCR activation. Forms a complex with CFTR and SLC4A7. Forms a complex with SLC4A7 and ATP6V1B1. Interacts with TRPC4 (via the PDZ-binding domain). Directly interacts with HTR4. Interacts (via the PDZ 1 domain) with PODXL (via the C-terminal PDZ-binding motif DTHL); interaction is not detected in glomerular epithelium cells. Interacts (via the PDZ 1 domain) with PODXL (via the C-terminal PDZ-binding motif DTHL); the interaction take place early in the secretory pathway and is necessary for its apical membrane sorting. Interacts with SLC26A3. Interacts with MCC. Interacts with SLC34A1. Interacts (via the PDZ domains) with SLC26A6 isoform 4 and isoform 5. Interacts (via PDZ domains) with ACE2 (via PDZ-binding motif); the interaction may enhance ACE2 membrane residence. Post-translationally, phosphorylated on serine residues.

Its subcellular location is the cytoplasm. It is found in the apical cell membrane. It localises to the endomembrane system. The protein resides in the cell projection. The protein localises to the filopodium. Its subcellular location is the ruffle. It is found in the microvillus. Scaffold protein that connects plasma membrane proteins with members of the ezrin/moesin/radixin family and thereby helps to link them to the actin cytoskeleton and to regulate their surface expression. Necessary for recycling of internalized ADRB2. Was first known to play a role in the regulation of the activity and subcellular location of SLC9A3. Necessary for cAMP-mediated phosphorylation and inhibition of SLC9A3. Involved in sperm capacitation. May participate in the regulation of the chloride and bicarbonate homeostasis in spermatozoa. May enhance Wnt signaling. May participate in HTR4 targeting to microvilli. Involved in the regulation of phosphate reabsorption in the renal proximal tubules. The protein is Na(+)/H(+) exchange regulatory cofactor NHE-RF1 (NHERF1) of Macaca fascicularis (Crab-eating macaque).